The following is a 172-amino-acid chain: Large ribosomal subunit protein uL10 (172 aa).

It belongs to the universal ribosomal protein uL10 family. In terms of assembly, part of the ribosomal stalk of the 50S ribosomal subunit. The N-terminus interacts with L11 and the large rRNA to form the base of the stalk. The C-terminus forms an elongated spine to which L12 dimers bind in a sequential fashion forming a multimeric L10(L12)X complex.

In terms of biological role, forms part of the ribosomal stalk, playing a central role in the interaction of the ribosome with GTP-bound translation factors. This chain is Large ribosomal subunit protein uL10 (rplJ), found in Liberibacter africanus subsp. capensis.